The primary structure comprises 371 residues: Aromatic peroxygenase (371 aa).

Residues 1 to 18 (MKYFPLFPTLVFAARVVA) form the signal peptide. Positions 19–43 (FPAYASLAGLSQQELDAIIPTLEAR) are excised as a propeptide. Asparagine 54 carries an N-linked (GlcNAc...) asparagine glycan. Cysteine 79 is a binding site for heme. 4 N-linked (GlcNAc...) asparagine glycosylation sites follow: asparagine 184, asparagine 204, asparagine 225, and asparagine 329. A disulfide bond links cysteine 321 and cysteine 362.

This sequence belongs to the chloroperoxidase family. Requires heme b as cofactor. In terms of processing, N-glycosylated.

It carries out the reaction RH + H2O2 = ROH + H2O.. In terms of biological role, aromatic peroxidase that oxidizes aryl alcohols into the corresponding aldehydes and then into the corresponding benzoic acids. Oxidizes toluene and naphthalene. Catalyzes the regioselective peroxide-dependent hydroxylation of propranolol and diclofenac to 5-hydroxypropranolol and 4'-hydroxydiclofenac. Catalyzes the regioselective peroxide-dependent hydroxylation of naphthalene to 1-naphthol or 2-naphthol via a naphthalene 1,2-oxide intermediate. Catalyzes the regioselective peroxide-dependent oxidation of pyridine to pyridine N-oxide. Halogenates monochlorodimedone and phenol. Oxidizes the sulfur-containing heterocycle dibenzothiophene to yield ring-hydroxylation products and to a lesser extent sulfoxidation products. The polypeptide is Aromatic peroxygenase (Cyclocybe aegerita (Black poplar mushroom)).